The primary structure comprises 415 residues: Tyrosine--tRNA ligase (415 aa).

Tyrosine 34 contacts L-tyrosine. The 'HIGH' region signature appears at 39 to 48; sequence PTADSLHLGH. 2 residues coordinate L-tyrosine: tyrosine 164 and glutamine 168. Residues 226–230 carry the 'KMSKS' region motif; the sequence is KFGKS. Position 229 (lysine 229) interacts with ATP. One can recognise an S4 RNA-binding domain in the interval 348 to 415; that stretch reads KNVVDFLVDG…KKKYFLGKVK (68 aa).

It belongs to the class-I aminoacyl-tRNA synthetase family. TyrS type 1 subfamily. Homodimer.

The protein localises to the cytoplasm. The catalysed reaction is tRNA(Tyr) + L-tyrosine + ATP = L-tyrosyl-tRNA(Tyr) + AMP + diphosphate + H(+). In terms of biological role, catalyzes the attachment of tyrosine to tRNA(Tyr) in a two-step reaction: tyrosine is first activated by ATP to form Tyr-AMP and then transferred to the acceptor end of tRNA(Tyr). The polypeptide is Tyrosine--tRNA ligase (Leuconostoc mesenteroides subsp. mesenteroides (strain ATCC 8293 / DSM 20343 / BCRC 11652 / CCM 1803 / JCM 6124 / NCDO 523 / NBRC 100496 / NCIMB 8023 / NCTC 12954 / NRRL B-1118 / 37Y)).